The following is a 58-amino-acid chain: Leucine zipper protein 6 (58 aa).

As to expression, widely expressed, highest levels found in brain, placenta, spleen, testis, and ovary. Up-regulated in some tumor cells.

This chain is Leucine zipper protein 6 (LUZP6), found in Homo sapiens (Human).